Reading from the N-terminus, the 433-residue chain is GTPase Obg (433 aa).

Positions 1 to 159 constitute an Obg domain; the sequence is MKFVDSADLI…FEIRAELKVL (159 aa). The OBG-type G domain occupies 160 to 332; the sequence is ADVGFVGLPN…LLFMIYEELK (173 aa). Residues 166-173, 191-195, 213-216, 284-287, and 313-315 each bind GTP; these read GLPNAGKS, FTTIT, DLPG, NKMD, and SGL. 2 residues coordinate Mg(2+): Ser173 and Thr193. The OCT domain occupies 355–433; the sequence is KFEEQKEDIQ…VFDYELEWTD (79 aa).

It belongs to the TRAFAC class OBG-HflX-like GTPase superfamily. OBG GTPase family. Monomer. It depends on Mg(2+) as a cofactor.

Its subcellular location is the cytoplasm. An essential GTPase which binds GTP, GDP and possibly (p)ppGpp with moderate affinity, with high nucleotide exchange rates and a fairly low GTP hydrolysis rate. Plays a role in control of the cell cycle, stress response, ribosome biogenesis and in those bacteria that undergo differentiation, in morphogenesis control. The chain is GTPase Obg from Mycoplasma mycoides subsp. mycoides SC (strain CCUG 32753 / NCTC 10114 / PG1).